The primary structure comprises 258 residues: Venom plasminogen activator LV-PA (258 aa).

The N-terminal stretch at 1 to 18 (MVLITVLANLLILQLSYA) is a signal peptide. Positions 19 to 24 (QKSSKL) are excised as a propeptide. The region spanning 25–249 (VFGGDECNIN…YTDWIQSIIA (225 aa)) is the Peptidase S1 domain. A glycan (N-linked (GlcNAc...) asparagine) is linked at asparagine 44. Cysteine 50 and cysteine 66 form a disulfide bridge. Catalysis depends on charge relay system residues histidine 65 and aspartate 110. 3 cysteine pairs are disulfide-bonded: cysteine 142–cysteine 210, cysteine 174–cysteine 189, and cysteine 200–cysteine 225. The Charge relay system role is filled by serine 204.

Belongs to the peptidase S1 family. Snake venom subfamily. As to quaternary structure, monomer. In terms of processing, N-glycosylated. PubMed:17034951 shows that it contains approximately 10% carbohydrates, PubMed:10871053 shows that it contains approximately 20% carbohydrates. As to expression, expressed by the venom gland.

The protein resides in the secreted. Inhibited by the serine protease inhibitors NPGB, PMSF, p-aminobenzamidine and aprotinin. Not inhibited by soybean trypsin inhibitor or EDTA. In terms of biological role, snake venom serine protease that activates plasminogen. Weakly hydrolyzes the alpha chain of human fibrinogen without releasing fibrinopeptide A. Does not hydrolyze plasma kallikrein or factor Xa. Does not clot fibrinogen. Does not affect platelet function. Induces hypotensive effects on rats. Shows a preferential cleavage at Lys-|-Xaa over Arg-|-Xaa bonds. The protein is Venom plasminogen activator LV-PA of Lachesis muta muta (Bushmaster).